A 1063-amino-acid polypeptide reads, in one-letter code: Unconventional myosin-Ic (1063 aa).

An N-acetylmethionine modification is found at methionine 1. Residue threonine 10 is modified to Phosphoserine. The Myosin motor domain maps to 47–731 (GVQDFVLLEN…TLFATEDSLE (685 aa)). ATP-binding positions include asparagine 88, tyrosine 96, 139 to 148 (SGESGAGKTE), and 192 to 196 (NDNSS). An N6-methyllysine modification is found at lysine 383. Residue serine 408 is modified to Phosphoserine. An N6-acetyllysine modification is found at lysine 486. Residue serine 536 is modified to Phosphoserine. Residues 608–630 (LLQLVEILRSKEPAYIRCIKPND) form an actin-binding region. 2 IQ domains span residues 734-757 (RQSL…FLRV) and 758-786 (KRSA…AAQT). Phosphoserine occurs at positions 864 and 1041. The 175-residue stretch at 885 to 1059 (KDNYPQSVPR…NGHLAVVAPR (175 aa)) folds into the TH1 domain.

Belongs to the TRAFAC class myosin-kinesin ATPase superfamily. Myosin family. As to quaternary structure, interacts (via its IQ motifs) with CABP1 and CIB1; the interaction with CABP1 and CIB1 is calcium-dependent. Interacts (via tail domain) with PLEKHB1 (via PH domain); the interaction is not affected by the presence or absence of calcium and CALM. Interacts with POLR1A. Interacts with POLR2A. Component of the B-WICH complex, at least composed of SMARCA5/SNF2H, BAZ1B/WSTF, SF3B1, DEK, MYO1C, ERCC6, MYBBP1A and DDX21. Interacts (via its IQ motifs) with CALM; this precludes interaction with YWHAB. Interacts with YWHAB; this precludes interaction with CALM. Interacts with RPS6. Interacts with actin. Interacts with LLPH. Interacts with GLUT4. Interacts (via its IQ motifs) with SH3BGRL3; the interaction is dependent on calcium and takes place at membrane ruffles. Post-translationally, isoform 2 contains a N-acetylmethionine at position 1. As to expression, isoform 3 is expressed in small intestine, pancreas, brain, kidney, skin, heart muscle, testis, striated muscle, spleen, liver and lung (at protein level). Expressed in brain, testis, adrenal glands, thymus, spleen, kidney, lung, heart, cochlea and vestibule. Expressed in sensory hair cells of the inner ear. Expressed in adipocytes.

It is found in the cytoplasm. The protein resides in the nucleus. It localises to the cell cortex. Its subcellular location is the cell projection. The protein localises to the stereocilium membrane. It is found in the cytoplasmic vesicle. The protein resides in the ruffle membrane. It localises to the nucleolus. Its subcellular location is the nucleoplasm. Myosins are actin-based motor molecules with ATPase activity. Unconventional myosins serve in intracellular movements. Their highly divergent tails bind to membranous compartments, which then are moved relative to actin filaments. Involved in glucose transporter recycling in response to insulin by regulating movement of intracellular GLUT4-containing vesicles to the plasma membrane. Component of the hair cell's (the sensory cells of the inner ear) adaptation-motor complex. Acts as a mediator of adaptation of mechanoelectrical transduction in stereocilia of vestibular hair cells. Binds phosphoinositides and links the actin cytoskeleton to cellular membranes. Its function is as follows. Involved in regulation of transcription. Associated with transcriptional active ribosomal genes. Appears to cooperate with the WICH chromatin-remodeling complex to facilitate transcription. Necessary for the formation of the first phosphodiester bond during transcription initiation. The sequence is that of Unconventional myosin-Ic (Myo1c) from Mus musculus (Mouse).